A 169-amino-acid chain; its full sequence is ATP synthase subunit b (169 aa).

A helical transmembrane segment spans residues Thr14–Phe34.

The protein belongs to the ATPase B chain family. In terms of assembly, F-type ATPases have 2 components, F(1) - the catalytic core - and F(0) - the membrane proton channel. F(1) has five subunits: alpha(3), beta(3), gamma(1), delta(1), epsilon(1). F(0) has four main subunits: a(1), b(2) and c(10-14). The alpha and beta chains form an alternating ring which encloses part of the gamma chain. F(1) is attached to F(0) by a central stalk formed by the gamma and epsilon chains, while a peripheral stalk is formed by the delta and b chains.

The protein localises to the cell membrane. Its function is as follows. F(1)F(0) ATP synthase produces ATP from ADP in the presence of a proton or sodium gradient. F-type ATPases consist of two structural domains, F(1) containing the extramembraneous catalytic core and F(0) containing the membrane proton channel, linked together by a central stalk and a peripheral stalk. During catalysis, ATP synthesis in the catalytic domain of F(1) is coupled via a rotary mechanism of the central stalk subunits to proton translocation. Functionally, component of the F(0) channel, it forms part of the peripheral stalk, linking F(1) to F(0). The polypeptide is ATP synthase subunit b (Heliobacterium modesticaldum (strain ATCC 51547 / Ice1)).